The following is a 436-amino-acid chain: Putative ankyrin repeat protein FPV245 (436 aa).

ANK repeat units follow at residues 1–30, 34–63, 67–96, 98–119, 123–152, 156–185, 189–218, 222–252, 253–283, and 287–317; these read MSVD…CINI, ETTT…QVNH, KIPN…DTSI, PVPC…KVNT, KSKT…DVNI, NGCY…YANV, YGNS…NISN, NGVT…DTDV, DGYT…DISI, and NGRN…LINE.

The protein is Putative ankyrin repeat protein FPV245 of Vertebrata (FPV).